The sequence spans 377 residues: SH2/SH3 adapter protein Nck1 (377 aa).

N-acetylalanine is present on Ala2. The SH3 1 domain maps to 2 to 61 (AEEVVVVAKFDYVAQQEQELDIKKNERLWLLDDSKSWWRVRNSMNKTGFVPSNYVERKNS). Phosphoserine occurs at positions 85, 91, and 96. Tyr105 is subject to Phosphotyrosine. An SH3 2 domain is found at 106–165 (DLNMPAFVKFNYMAEREDELSLIKGTKVIVMEKCSDGWWRGSYNGQIGWFPSNYVTEEGD). Ser166 carries the phosphoserine modification. An SH3 3 domain is found at 190–252 (QVLHVVQALY…PKNYVTIMQN (63 aa)). Residues 282–376 (WYYGKVTRHQ…GEKLYLVKHL (95 aa)) enclose the SH2 domain.

Interacts (via SH2 domain and SH3 domain 2) with EGFR. Interacts with PAK1 and SOS1. Interacts (via SH3 domains) with PKN2. Associates with BLNK, PLCG1, VAV1 and NCK1 in a B-cell antigen receptor-dependent fashion. Interacts with SOCS7. This interaction is required for nuclear import. Part of a complex containing PPP1R15B, PP1 and NCK1. Interacts with RALGPS1. Interacts with CAV2 (tyrosine phosphorylated form). Interacts with ADAM15. Interacts with FASLG. Directly interacts with RASA1. Interacts with isoform 4 of MINK1. Interacts with FLT1 (tyrosine phosphorylated). Interacts with KDR (tyrosine phosphorylated). Interacts (via SH2 domain) with EPHB1; activates the JUN cascade to regulate cell adhesion. Interacts with EPHA2. Interacts (via SH2 domain) with PDGFRB (tyrosine phosphorylated). Interacts with the inactive form of EIF2AK2/PKR. Interacts with PTPN1. Interacts with INSR/insulin receptor (in response to insulin stimulation); this interaction may mediate PTPN1 recruitment leading to INSR dephosphorylation. Interacts with CD3E (via Proline-rich sequence); the interaction is ligand dependent but independent of tyrosine kinase activation. Interacts with EGFR. Interacts with IRS1. In terms of processing, phosphorylated on Ser and Tyr residues. Phosphorylated in response to activation of EGFR and FcERI. Phosphorylated by activated PDGFRB.

The protein localises to the cytoplasm. Its subcellular location is the endoplasmic reticulum. It is found in the nucleus. Its function is as follows. Adapter protein which associates with tyrosine-phosphorylated growth factor receptors, such as KDR and PDGFRB, or their cellular substrates. Maintains low levels of EIF2S1 phosphorylation by promoting its dephosphorylation by PP1. Plays a role in the DNA damage response, not in the detection of the damage by ATM/ATR, but for efficient activation of downstream effectors, such as that of CHEK2. Plays a role in ELK1-dependent transcriptional activation in response to activated Ras signaling. Modulates the activation of EIF2AK2/PKR by dsRNA. May play a role in cell adhesion and migration through interaction with ephrin receptors. Also acts as an adpater protein for the T cell receptor complex (TCR-CD3E). Upon ligand engagement, is recruited by CD3E and promotes maturation of the immune synapse and T cell activation. This is SH2/SH3 adapter protein Nck1 (Nck1) from Mus musculus (Mouse).